Here is a 1339-residue protein sequence, read N- to C-terminus: Transcription factor tau subunit sfc3 (1339 aa).

Positions M470 to S515 are disordered. Positions P485–I497 form a DNA-binding region, a.T hook. Over residues A495 to P514 the composition is skewed to polar residues. Residues S595 and S596 each carry the phosphoserine modification. Residues R791 to P826 form a disordered region. Positions E798–P826 are enriched in basic and acidic residues.

As to quaternary structure, component of the TFIIIC complex including sfc1, sfc3, sfc4, sfc6 and sfc7. The subunits are organized in two globular domains, tauA and tauB, connected by a proteolysis-sensitive and flexible linker. Interacts with sfc1, sfc4 and sfc6.

Its subcellular location is the nucleus envelope. Functionally, TFIIIC mediates tRNA and 5S RNA gene activation by binding to intragenic promoter elements. Upstream of the transcription start site, TFIIIC assembles the initiation complex TFIIIB-TFIIIC-tDNA, which is sufficient for RNA polymerase III recruitment and function. Part of the tauB domain of TFIIIC that binds boxB DNA promoter sites of tRNA and similar genes. Cooperates with sfc6 in DNA binding. Localizes to chromatin insulator sequence without recruiting RNA polymerase III and plays a role in nuclear organization. The sequence is that of Transcription factor tau subunit sfc3 from Schizosaccharomyces pombe (strain 972 / ATCC 24843) (Fission yeast).